Here is a 506-residue protein sequence, read N- to C-terminus: Maturase K (506 aa).

Belongs to the intron maturase 2 family. MatK subfamily.

It is found in the plastid. The protein localises to the chloroplast. Functionally, usually encoded in the trnK tRNA gene intron. Probably assists in splicing its own and other chloroplast group II introns. This is Maturase K from Calluna vulgaris (Heather).